The chain runs to 116 residues: Phosphoribosyl-ATP pyrophosphatase (116 aa).

The protein belongs to the PRA-PH family.

It localises to the cytoplasm. It carries out the reaction 1-(5-phospho-beta-D-ribosyl)-ATP + H2O = 1-(5-phospho-beta-D-ribosyl)-5'-AMP + diphosphate + H(+). Its pathway is amino-acid biosynthesis; L-histidine biosynthesis; L-histidine from 5-phospho-alpha-D-ribose 1-diphosphate: step 2/9. The chain is Phosphoribosyl-ATP pyrophosphatase from Bordetella avium (strain 197N).